A 397-amino-acid chain; its full sequence is DnaJ protein homolog 1 (397 aa).

Residues 1-52 (KNASPDDLKKAYRKAAIKNHPDKGGDPEKFKELAQAYDVLSDPEKREIYDQY) form the J domain. The segment at 114–198 (GTSKKLSLSR…CKGEKVVQEK (85 aa)) adopts a CR-type zinc-finger fold. CXXCXGXG motif repeat units lie at residues 127–134 (CSKCNGKG), 143–150 (CASCQGSG), 170–177 (CNDCKGTG), and 186–193 (CPLCKGEK). Residues 367-397 (MRRKQHQHAQEAYDEDDEGHGGGQRVQCAQQ) are disordered. A Cysteine methyl ester modification is found at cysteine 394. Residue cysteine 394 is the site of S-farnesyl cysteine attachment. A propeptide spans 395–397 (AQQ) (removed in mature form).

The protein localises to the membrane. In terms of biological role, plays a continuous role in plant development probably in the structural organization of compartments. This is DnaJ protein homolog 1 (DNAJ1) from Allium porrum (Leek).